Here is a 282-residue protein sequence, read N- to C-terminus: Deoxyribonuclease-1 (282 aa).

The signal sequence occupies residues 1–22; the sequence is MRGARLTGALLALAGLLQVALS. N40 carries N-linked (GlcNAc...) asparagine glycosylation. The active site involves E100. C123 and C126 are joined by a disulfide. N128 carries N-linked (GlcNAc...) asparagine glycosylation. H156 is an active-site residue. The cysteines at positions 195 and 231 are disulfide-linked.

It belongs to the DNase I family. Ca(2+) is required as a cofactor. Requires Mg(2+) as cofactor.

It localises to the secreted. Its subcellular location is the zymogen granule. The protein resides in the nucleus envelope. The catalysed reaction is Endonucleolytic cleavage to 5'-phosphodinucleotide and 5'-phosphooligonucleotide end-products.. Functionally, serum endocuclease secreted into body fluids by a wide variety of exocrine and endocrine organs. Expressed by non-hematopoietic tissues and preferentially cleaves protein-free DNA. Among other functions, seems to be involved in cell death by apoptosis. Binds specifically to G-actin and blocks actin polymerization. Together with DNASE1L3, plays a key role in degrading neutrophil extracellular traps (NETs). NETs are mainly composed of DNA fibers and are released by neutrophils to bind pathogens during inflammation. Degradation of intravascular NETs by DNASE1 and DNASE1L3 is required to prevent formation of clots that obstruct blood vessels and cause organ damage following inflammation. This Equus caballus (Horse) protein is Deoxyribonuclease-1 (DNASE1).